Here is a 704-residue protein sequence, read N- to C-terminus: Elongation factor G (704 aa).

One can recognise a tr-type G domain in the interval 8 to 291; the sequence is DKVRNIGIMA…AVVDYLASPL (284 aa). Residues 17-24, 90-94, and 144-147 contribute to the GTP site; these read AHIDAGKT, DTPGH, and NKMD.

Belongs to the TRAFAC class translation factor GTPase superfamily. Classic translation factor GTPase family. EF-G/EF-2 subfamily.

Its subcellular location is the cytoplasm. In terms of biological role, catalyzes the GTP-dependent ribosomal translocation step during translation elongation. During this step, the ribosome changes from the pre-translocational (PRE) to the post-translocational (POST) state as the newly formed A-site-bound peptidyl-tRNA and P-site-bound deacylated tRNA move to the P and E sites, respectively. Catalyzes the coordinated movement of the two tRNA molecules, the mRNA and conformational changes in the ribosome. The protein is Elongation factor G of Chlorobium luteolum (strain DSM 273 / BCRC 81028 / 2530) (Pelodictyon luteolum).